We begin with the raw amino-acid sequence, 285 residues long: GTP cyclohydrolase 1 type 2 homolog (285 aa).

The a divalent metal cation site is built by histidine 65, histidine 66, aspartate 104, histidine 230, and glutamate 234.

The protein belongs to the GTP cyclohydrolase I type 2/NIF3 family. Homohexamer.

The polypeptide is GTP cyclohydrolase 1 type 2 homolog (Streptomyces coelicolor (strain ATCC BAA-471 / A3(2) / M145)).